The chain runs to 60 residues: Large ribosomal subunit protein uL30 (60 aa).

The protein belongs to the universal ribosomal protein uL30 family. In terms of assembly, part of the 50S ribosomal subunit.

The polypeptide is Large ribosomal subunit protein uL30 (Symbiobacterium thermophilum (strain DSM 24528 / JCM 14929 / IAM 14863 / T)).